The chain runs to 202 residues: Outer-membrane lipoprotein carrier protein (202 aa).

Positions 1–18 are cleaved as a signal peptide; it reads MNKLFLILLLIFSHEVFS.

This sequence belongs to the LolA family. Monomer.

Its subcellular location is the periplasm. Its function is as follows. Participates in the translocation of lipoproteins from the inner membrane to the outer membrane. Only forms a complex with a lipoprotein if the residue after the N-terminal Cys is not an aspartate (The Asp acts as a targeting signal to indicate that the lipoprotein should stay in the inner membrane). The protein is Outer-membrane lipoprotein carrier protein of Legionella pneumophila (strain Corby).